We begin with the raw amino-acid sequence, 192 residues long: Ubiquitin-conjugating enzyme E2 27 (192 aa).

Residues 2 to 150 (IDFSRIQKEL…ARYWTETFAK (149 aa)) enclose the UBC core domain. Cys88 acts as the Glycyl thioester intermediate in catalysis. The region spanning 153 to 192 (SLEEKVKRLVEMGFGDAQVRSAIESSGGDENLALEKLCSA) is the UBA domain.

The protein belongs to the ubiquitin-conjugating enzyme family. Expressed in seeds, pistils, siliques, hypocotyls and leaves.

It carries out the reaction S-ubiquitinyl-[E1 ubiquitin-activating enzyme]-L-cysteine + [E2 ubiquitin-conjugating enzyme]-L-cysteine = [E1 ubiquitin-activating enzyme]-L-cysteine + S-ubiquitinyl-[E2 ubiquitin-conjugating enzyme]-L-cysteine.. It participates in protein modification; protein ubiquitination. Functionally, accepts the ubiquitin from the E1 complex and catalyzes its covalent attachment to other proteins. The polypeptide is Ubiquitin-conjugating enzyme E2 27 (UBC27) (Arabidopsis thaliana (Mouse-ear cress)).